Reading from the N-terminus, the 213-residue chain is Adenylate kinase (213 aa).

10–15 (GAGKGT) serves as a coordination point for ATP. Residues 30-59 (STGDMFRAAMANQTEMGVLAKSYIDKGDLV) are NMP. Residues Thr31, Arg36, 57–59 (DLV), 86–89 (GYPR), and Gln93 each bind AMP. Residues 127–160 (GRIINKKTGETFHKIFNPPVGDYKEEDFYQREDD) are LID. Residues Arg128 and 137 to 138 (TF) contribute to the ATP site. Residues Arg157 and Arg168 each contribute to the AMP site. Lys196 lines the ATP pocket.

Belongs to the adenylate kinase family. As to quaternary structure, monomer.

It localises to the cytoplasm. The catalysed reaction is AMP + ATP = 2 ADP. It functions in the pathway purine metabolism; AMP biosynthesis via salvage pathway; AMP from ADP: step 1/1. In terms of biological role, catalyzes the reversible transfer of the terminal phosphate group between ATP and AMP. Plays an important role in cellular energy homeostasis and in adenine nucleotide metabolism. This chain is Adenylate kinase, found in Streptococcus equi subsp. equi (strain 4047).